Consider the following 97-residue polypeptide: UPF0213 protein YE0453 (97 aa).

A GIY-YIG domain is found at 4–79 (SLWHLYLLRT…KQLSKQQKEK (76 aa)).

This sequence belongs to the UPF0213 family.

The chain is UPF0213 protein YE0453 from Yersinia enterocolitica serotype O:8 / biotype 1B (strain NCTC 13174 / 8081).